The following is a 124-amino-acid chain: Small ribosomal subunit protein uS12 (124 aa).

A 3-methylthioaspartic acid modification is found at Asp-89. A disordered region spans residues Thr-104–Lys-124. A compositionally biased stretch (basic residues) spans Gln-112 to Lys-124.

Belongs to the universal ribosomal protein uS12 family. Part of the 30S ribosomal subunit. Contacts proteins S8 and S17. May interact with IF1 in the 30S initiation complex.

In terms of biological role, with S4 and S5 plays an important role in translational accuracy. Its function is as follows. Interacts with and stabilizes bases of the 16S rRNA that are involved in tRNA selection in the A site and with the mRNA backbone. Located at the interface of the 30S and 50S subunits, it traverses the body of the 30S subunit contacting proteins on the other side and probably holding the rRNA structure together. The combined cluster of proteins S8, S12 and S17 appears to hold together the shoulder and platform of the 30S subunit. The polypeptide is Small ribosomal subunit protein uS12 (Pseudothermotoga lettingae (strain ATCC BAA-301 / DSM 14385 / NBRC 107922 / TMO) (Thermotoga lettingae)).